Here is a 349-residue protein sequence, read N- to C-terminus: Hydroxymethylglutaryl-CoA synthase (349 aa).

(3S)-3-hydroxy-3-methylglutaryl-CoA-binding residues include aspartate 30 and alanine 31. Catalysis depends on glutamate 82, which acts as the Proton donor/acceptor. (3S)-3-hydroxy-3-methylglutaryl-CoA contacts are provided by cysteine 114 and threonine 155. Cysteine 114 functions as the Acyl-thioester intermediate in the catalytic mechanism. Arginine 203 is a binding site for CoA. (3S)-3-hydroxy-3-methylglutaryl-CoA contacts are provided by threonine 205 and histidine 238. The Proton donor/acceptor role is filled by histidine 238. Lysine 243 lines the CoA pocket. 2 residues coordinate (3S)-3-hydroxy-3-methylglutaryl-CoA: asparagine 270 and serine 300.

Belongs to the thiolase-like superfamily. Archaeal HMG-CoA synthase family. As to quaternary structure, interacts with acetoacetyl-CoA thiolase that catalyzes the precedent step in the pathway and with a DUF35 protein. The acetoacetyl-CoA thiolase/HMG-CoA synthase complex channels the intermediate via a fused CoA-binding site, which allows for efficient coupling of the endergonic thiolase reaction with the exergonic HMGCS reaction.

It carries out the reaction acetoacetyl-CoA + acetyl-CoA + H2O = (3S)-3-hydroxy-3-methylglutaryl-CoA + CoA + H(+). The protein operates within metabolic intermediate biosynthesis; (R)-mevalonate biosynthesis; (R)-mevalonate from acetyl-CoA: step 2/3. In terms of biological role, catalyzes the condensation of acetyl-CoA with acetoacetyl-CoA to form 3-hydroxy-3-methylglutaryl-CoA (HMG-CoA). Functions in the mevalonate (MVA) pathway leading to isopentenyl diphosphate (IPP), a key precursor for the biosynthesis of isoprenoid compounds that are building blocks of archaeal membrane lipids. In Methanococcus maripaludis (strain C5 / ATCC BAA-1333), this protein is Hydroxymethylglutaryl-CoA synthase.